A 108-amino-acid chain; its full sequence is DIQMTQTTSSLSASLGHRVTITCSASQDISNYLNWYQQKPDGTVKLLIYYTSRLHSGVPSRFSGSGSATDYSLTITNLQQEDXATYXCQQGNTLPYTFGGGTKLXIKR.

The tract at residues 1-23 (DIQMTQTTSSLSASLGHRVTITC) is framework-1. Cysteine 23 and cysteine 88 are oxidised to a cystine. The segment at 24-34 (SASQDISNYLN) is complementarity-determining-1. The interval 35 to 49 (WYQQKPDGTVKLLIY) is framework-2. Positions 50 to 56 (YTSRLHS) are complementarity-determining-2. Residues 57 to 88 (GVPSRFSGSGSATDYSLTITNLQQEDXATYXC) are framework-3. The complementarity-determining-3 stretch occupies residues 89–97 (QQGNTLPYT). The tract at residues 98-107 (FGGGTKLXIK) is framework-4.

Its function is as follows. Anti-2-phenyl oxazolone (PHOX) Antibody. The protein is Ig kappa chain V-V region NQ5-89.4 of Mus musculus (Mouse).